We begin with the raw amino-acid sequence, 249 residues long: Ribosomal RNA small subunit methyltransferase J (249 aa).

S-adenosyl-L-methionine contacts are provided by residues 101–102, 117–118, and D171; these read RD and ER.

The protein belongs to the methyltransferase superfamily. RsmJ family.

The protein resides in the cytoplasm. The enzyme catalyses guanosine(1516) in 16S rRNA + S-adenosyl-L-methionine = N(2)-methylguanosine(1516) in 16S rRNA + S-adenosyl-L-homocysteine + H(+). Specifically methylates the guanosine in position 1516 of 16S rRNA. In Tolumonas auensis (strain DSM 9187 / NBRC 110442 / TA 4), this protein is Ribosomal RNA small subunit methyltransferase J.